The sequence spans 373 residues: MAVKVLVVDDSGFFRRRVSEILSADSNIQVVGTATNGKEAIDQALALKPDVITMDYEMPMMDGITAVRHIMQRCPTPVLMFSSLTHEGARVTLDALDAGAVDFLPKNFEDISRNPEKVKQLLCEKVHSISRSNRRFSSYSAPAPQPASAPAPAPSSFASSRSPAPAPAPARAAAPAASANSPAPKRKAYKLVAIGTSTGGPVALQRVLTQLPANFPAPIVLIQHMPAAFTKAFAERLDKLCRISVKEAEDGDILRPGLALLAPGGKQMMVDGRGAVKILPGDERLNYKPCVDITFGSAAKSYSDKVLAVVLTGMGADGREGARLLKQGGSAVWAQDEASCVIYGMPMAIVKANLADAVYSLDDIGRHLVEACL.

The 118-residue stretch at 4 to 121 folds into the Response regulatory domain; it reads KVLVVDDSGF…SRNPEKVKQL (118 aa). Aspartate 55 carries the 4-aspartylphosphate modification. Residues 136–181 are disordered; sequence FSSYSAPAPQPASAPAPAPSSFASSRSPAPAPAPARAAAPAASANS. The segment covering 143–153 has biased composition (pro residues); that stretch reads APQPASAPAPA. Positions 154 to 181 are enriched in low complexity; the sequence is PSSFASSRSPAPAPAPARAAAPAASANS. The region spanning 182 to 370 is the CheB-type methylesterase domain; the sequence is PAPKRKAYKL…LDDIGRHLVE (189 aa). Catalysis depends on residues serine 197, histidine 224, and aspartate 317.

This sequence belongs to the CheB family. Post-translationally, phosphorylated by CheA. Phosphorylation of the N-terminal regulatory domain activates the methylesterase activity.

It is found in the cytoplasm. It catalyses the reaction [protein]-L-glutamate 5-O-methyl ester + H2O = L-glutamyl-[protein] + methanol + H(+). The catalysed reaction is L-glutaminyl-[protein] + H2O = L-glutamyl-[protein] + NH4(+). Involved in chemotaxis. Part of a chemotaxis signal transduction system that modulates chemotaxis in response to various stimuli. Catalyzes the demethylation of specific methylglutamate residues introduced into the chemoreceptors (methyl-accepting chemotaxis proteins or MCP) by CheR. Also mediates the irreversible deamidation of specific glutamine residues to glutamic acid. The protein is Protein-glutamate methylesterase/protein-glutamine glutaminase 2 of Pseudomonas fluorescens (strain ATCC BAA-477 / NRRL B-23932 / Pf-5).